Here is a 186-residue protein sequence, read N- to C-terminus: Large ribosomal subunit protein bL9 (186 aa).

Residues 153–186 (ELRQVKSQSQKSQQQEAKQNEVGEATDSDKADQK) are disordered. Positions 157 to 169 (VKSQSQKSQQQEA) are enriched in low complexity.

It belongs to the bacterial ribosomal protein bL9 family.

In terms of biological role, binds to the 23S rRNA. The sequence is that of Large ribosomal subunit protein bL9 from Wolbachia sp. subsp. Brugia malayi (strain TRS).